The primary structure comprises 274 residues: Acetyl-coenzyme A carboxylase carboxyl transferase subunit alpha (274 aa).

In terms of domain architecture, CoA carboxyltransferase C-terminal spans 2–250; the sequence is NKEFIKSIVV…KKELMNAMNE (249 aa).

The protein belongs to the AccA family. Acetyl-CoA carboxylase is a heterohexamer composed of biotin carboxyl carrier protein (AccB), biotin carboxylase (AccC) and two subunits each of ACCase subunit alpha (AccA) and ACCase subunit beta (AccD).

It is found in the cytoplasm. It carries out the reaction N(6)-carboxybiotinyl-L-lysyl-[protein] + acetyl-CoA = N(6)-biotinyl-L-lysyl-[protein] + malonyl-CoA. It participates in lipid metabolism; malonyl-CoA biosynthesis; malonyl-CoA from acetyl-CoA: step 1/1. Its function is as follows. Component of the acetyl coenzyme A carboxylase (ACC) complex. First, biotin carboxylase catalyzes the carboxylation of biotin on its carrier protein (BCCP) and then the CO(2) group is transferred by the carboxyltransferase to acetyl-CoA to form malonyl-CoA. The protein is Acetyl-coenzyme A carboxylase carboxyl transferase subunit alpha of Clostridium botulinum (strain Eklund 17B / Type B).